Consider the following 94-residue polypeptide: Co-chaperonin GroES (94 aa).

Belongs to the GroES chaperonin family. Heptamer of 7 subunits arranged in a ring. Interacts with the chaperonin GroEL.

It localises to the cytoplasm. Together with the chaperonin GroEL, plays an essential role in assisting protein folding. The GroEL-GroES system forms a nano-cage that allows encapsulation of the non-native substrate proteins and provides a physical environment optimized to promote and accelerate protein folding. GroES binds to the apical surface of the GroEL ring, thereby capping the opening of the GroEL channel. The protein is Co-chaperonin GroES of Lactiplantibacillus plantarum (strain ATCC BAA-793 / NCIMB 8826 / WCFS1) (Lactobacillus plantarum).